Reading from the N-terminus, the 234-residue chain is Protein UL20 homolog (234 aa).

The next 4 membrane-spanning stretches (helical) occupy residues 82–102, 112–132, 153–173, and 191–211; these read VVLFGLSTFVLRPSCCLIFLF, FLILGTTITAFFYGTLMLEMY, IGALSMLGPIIFVAISYNMIF, and TSGFVIYLVMIASLAYSITSI.

This sequence belongs to the alphaherpesvirinae UL20 family. In terms of assembly, interacts with gK (via N-terminus); this interaction plays a role in the coordinate transport of UL20 and gK to the trans-Golgi network (TGN), and is required for their cell surface expression. Interacts with gB.

Its subcellular location is the virion. It is found in the host cell membrane. The protein resides in the host endosome membrane. The protein localises to the host Golgi apparatus membrane. It localises to the host nucleus membrane. Functionally, plays an essential role in egress of virus particles from the nucleus, cytoplasmic envelopment and virus-induced cell fusion. Forms a functional protein complex with gK and this interaction is absolutely essential for their coordinate intracellular transport, gK glycosylation, expression on host cell surface, and function. Together, they modulate gB-mediated virus-induced cell fusion and virion egress and therefore actively participate in these processes. In Gallid herpesvirus 2 (strain Chicken/Md5/ATCC VR-987) (GaHV-2), this protein is Protein UL20 homolog (MDV032).